We begin with the raw amino-acid sequence, 1113 residues long: Myosin-binding protein 1 (1113 aa).

Residues leucine 12 to alanine 34 form a helical membrane-spanning segment. The tract at residues glutamate 209–proline 229 is disordered. One can recognise a GTD-binding domain in the interval serine 888–arginine 986.

As to quaternary structure, interacts with myosin XI-K, XI-I and XI-1. Expressed in leaf epidermal cells, roots and root hairs.

The protein resides in the endomembrane system. Membrane-anchored myosin receptors that define a distinct, plant-specific transport vesicle compartment. In Arabidopsis thaliana (Mouse-ear cress), this protein is Myosin-binding protein 1.